Consider the following 666-residue polypeptide: NAD(P)H-quinone oxidoreductase subunit 5, organellar chromatophore 1 (666 aa).

The next 15 membrane-spanning stretches (helical) occupy residues L8–I28, A41–A61, V90–V110, S121–L141, L145–F165, F190–A210, G220–A240, T259–A279, I293–Q313, L328–I348, G396–W416, S428–F448, T497–W517, F542–I562, and G643–F663.

Belongs to the complex I subunit 5 family. NDH is composed of at least 16 different subunits, 5 of which are encoded in the nucleus.

Its subcellular location is the plastid. It localises to the organellar chromatophore thylakoid membrane. The enzyme catalyses a plastoquinone + NADH + (n+1) H(+)(in) = a plastoquinol + NAD(+) + n H(+)(out). It catalyses the reaction a plastoquinone + NADPH + (n+1) H(+)(in) = a plastoquinol + NADP(+) + n H(+)(out). Functionally, NDH shuttles electrons from NAD(P)H:plastoquinone, via FMN and iron-sulfur (Fe-S) centers, to quinones in the photosynthetic chain and possibly in a chloroplast respiratory chain. The immediate electron acceptor for the enzyme in this species is believed to be plastoquinone. Couples the redox reaction to proton translocation, and thus conserves the redox energy in a proton gradient. In Paulinella chromatophora, this protein is NAD(P)H-quinone oxidoreductase subunit 5, organellar chromatophore 1 (ndhF1).